The chain runs to 392 residues: L-lactate dehydrogenase (392 aa).

Residues 1–380 (MIISASTDYR…GSDSLVTGSA (380 aa)) form the FMN hydroxy acid dehydrogenase domain. Tyrosine 24 provides a ligand contact to substrate. Residues serine 106 and glutamine 127 each contribute to the FMN site. Tyrosine 129 is a substrate binding site. FMN is bound at residue threonine 155. Position 164 (arginine 164) interacts with substrate. Lysine 251 serves as a coordination point for FMN. Residue histidine 275 is the Proton acceptor of the active site. Arginine 278 is a binding site for substrate. 306-330 (DSGVRNGLDVVRMIAMGADTILLGR) contacts FMN.

Belongs to the FMN-dependent alpha-hydroxy acid dehydrogenase family. FMN is required as a cofactor.

The protein localises to the cell inner membrane. It carries out the reaction (S)-lactate + A = pyruvate + AH2. Its function is as follows. Catalyzes the conversion of L-lactate to pyruvate. Is coupled to the respiratory chain. In Chromohalobacter salexigens (strain ATCC BAA-138 / DSM 3043 / CIP 106854 / NCIMB 13768 / 1H11), this protein is L-lactate dehydrogenase.